We begin with the raw amino-acid sequence, 137 residues long: Ribosomal RNA large subunit methyltransferase H (137 aa).

Residues Leu56, Gly85, and Leu104–Leu109 contribute to the S-adenosyl-L-methionine site.

It belongs to the RNA methyltransferase RlmH family. As to quaternary structure, homodimer.

Its subcellular location is the cytoplasm. The catalysed reaction is pseudouridine(1915) in 23S rRNA + S-adenosyl-L-methionine = N(3)-methylpseudouridine(1915) in 23S rRNA + S-adenosyl-L-homocysteine + H(+). Functionally, specifically methylates the pseudouridine at position 1915 (m3Psi1915) in 23S rRNA. This chain is Ribosomal RNA large subunit methyltransferase H, found in Thermus thermophilus (strain ATCC 27634 / DSM 579 / HB8).